Reading from the N-terminus, the 122-residue chain is MNFRMEHTMQPLPPEKHEDAEIAAGFLSAMANPKRLLILDSLVKEEMAVGALAHKVGLSQSALSQHLSKLRAQNLVSTRRDAQTIYYSSSSDAVLKILGALSDIYGDDTDAVEEKPLVRKSA.

The region spanning 15-109 (EKHEDAEIAA…ALSDIYGDDT (95 aa)) is the HTH arsR-type domain. A DNA-binding region (H-T-H motif) is located at residues 49 to 68 (VGALAHKVGLSQSALSQHLS).

Binds to the operator site in homodimeric form.

Its function is as follows. Negative transacting factor controlling the nod regulon. May control the expression of nodD1, nodD2, nodD3 and nodABC genes. The sequence is that of Nodulation protein NolR (nolR) from Rhizobium meliloti (Ensifer meliloti).